A 505-amino-acid polypeptide reads, in one-letter code: Protein disulfide-isomerase (505 aa).

The first 20 residues, 1 to 20, serve as a signal peptide directing secretion; the sequence is MHKAQKFALGLLAAAAVATA. 2 Thioredoxin domains span residues 21 to 128 and 335 to 465; these read SDVV…QSLP and FVAG…ENGK. Residues C50, C53, C385, and C388 each act as nucleophile in the active site. 2 disulfide bridges follow: C50-C53 and C385-C388. The interval 470–505 is disordered; sequence ISEDAEETSSATETTTETATKSEEAAKETATEHDEL. Low complexity predominate over residues 477–488; it reads TSSATETTTETA. Basic and acidic residues predominate over residues 489 to 505; the sequence is TKSEEAAKETATEHDEL. The Prevents secretion from ER signature appears at 502–505; sequence HDEL.

It belongs to the protein disulfide isomerase family.

The protein resides in the endoplasmic reticulum lumen. The enzyme catalyses Catalyzes the rearrangement of -S-S- bonds in proteins.. In terms of biological role, participates in the folding of proteins containing disulfide bonds, may be involved in glycosylation, prolyl hydroxylation and triglyceride transfer. This is Protein disulfide-isomerase from Humicola insolens (Soft-rot fungus).